The chain runs to 488 residues: Katanin p60 ATPase-containing subunit A-like 1 (488 aa).

N-acetylmethionine is present on methionine 1. Residues 95-179 are disordered; it reads DPAVWPPPVP…GASDSEIPKF (85 aa). Positions 116–127 are enriched in basic and acidic residues; sequence PNREVRPLRKDV. Over residues 128-138 the composition is skewed to low complexity; sequence GAGARGLVGRA. Positions 142 to 167 are enriched in basic and acidic residues; it reads SKSDKPASRDKDYRARGRDDKARKNV. Serine 172 is modified (phosphoserine). ATP is bound at residue 246–253; sequence GPPGTGKT.

Belongs to the AAA ATPase family. Katanin p60 subunit A1 subfamily. A-like 1 sub-subfamily. In terms of assembly, interacts with KATNB1 and KATNBL1. In terms of tissue distribution, widely expressed, including in testis, brain, heart, lung, kidney, liver, spleen, seminal vesicles and ovary. In testis, restricted to Sertoli cells within the seminiferous epithelium (at protein level).

The protein localises to the cytoplasm. It is found in the cytoskeleton. Its subcellular location is the spindle pole. The protein resides in the spindle. It carries out the reaction n ATP + n H2O + a microtubule = n ADP + n phosphate + (n+1) alpha/beta tubulin heterodimers.. Regulates microtubule dynamics in Sertoli cells, a process that is essential for spermiogenesis and male fertility. Severs microtubules in an ATP-dependent manner, promoting rapid reorganization of cellular microtubule arrays. Has microtubule-severing activity in vitro. This Mus musculus (Mouse) protein is Katanin p60 ATPase-containing subunit A-like 1 (Katnal1).